The sequence spans 396 residues: Ribosomal RNA large subunit methyltransferase I (396 aa).

Positions 2–81 constitute a PUA domain; that stretch reads SVRLVLAKGR…ESIDIAFFSR (80 aa).

Belongs to the methyltransferase superfamily. RlmI family.

The protein localises to the cytoplasm. It carries out the reaction cytidine(1962) in 23S rRNA + S-adenosyl-L-methionine = 5-methylcytidine(1962) in 23S rRNA + S-adenosyl-L-homocysteine + H(+). Its function is as follows. Specifically methylates the cytosine at position 1962 (m5C1962) of 23S rRNA. The sequence is that of Ribosomal RNA large subunit methyltransferase I from Escherichia coli (strain K12 / MC4100 / BW2952).